A 187-amino-acid polypeptide reads, in one-letter code: Elongation factor P (187 aa).

It belongs to the elongation factor P family.

The protein resides in the cytoplasm. Its pathway is protein biosynthesis; polypeptide chain elongation. Involved in peptide bond synthesis. Stimulates efficient translation and peptide-bond synthesis on native or reconstituted 70S ribosomes in vitro. Probably functions indirectly by altering the affinity of the ribosome for aminoacyl-tRNA, thus increasing their reactivity as acceptors for peptidyl transferase. The chain is Elongation factor P from Corynebacterium jeikeium (strain K411).